The sequence spans 215 residues: Pyrrolidone-carboxylate peptidase (215 aa).

Residues Glu-80, Cys-143, and His-167 contribute to the active site.

Belongs to the peptidase C15 family. Homotetramer.

Its subcellular location is the cytoplasm. The enzyme catalyses Release of an N-terminal pyroglutamyl group from a polypeptide, the second amino acid generally not being Pro.. In terms of biological role, removes 5-oxoproline from various penultimate amino acid residues except L-proline. In Bacillus mycoides (strain KBAB4) (Bacillus weihenstephanensis), this protein is Pyrrolidone-carboxylate peptidase.